The chain runs to 253 residues: 3-deoxy-manno-octulosonate cytidylyltransferase (253 aa).

Belongs to the KdsB family.

Its subcellular location is the cytoplasm. It catalyses the reaction 3-deoxy-alpha-D-manno-oct-2-ulosonate + CTP = CMP-3-deoxy-beta-D-manno-octulosonate + diphosphate. The protein operates within nucleotide-sugar biosynthesis; CMP-3-deoxy-D-manno-octulosonate biosynthesis; CMP-3-deoxy-D-manno-octulosonate from 3-deoxy-D-manno-octulosonate and CTP: step 1/1. It functions in the pathway bacterial outer membrane biogenesis; lipopolysaccharide biosynthesis. In terms of biological role, activates KDO (a required 8-carbon sugar) for incorporation into bacterial lipopolysaccharide in Gram-negative bacteria. This Acinetobacter baumannii (strain ATCC 17978 / DSM 105126 / CIP 53.77 / LMG 1025 / NCDC KC755 / 5377) protein is 3-deoxy-manno-octulosonate cytidylyltransferase.